Reading from the N-terminus, the 69-residue chain is Toxin Tz2 (69 aa).

Positions 1 to 7 (IEVVMGG) are cleaved as a signal peptide. The region spanning 8-69 (KEGYLLDKSN…KMWDLKTNKC (62 aa)) is the LCN-type CS-alpha/beta domain. 4 disulfides stabilise this stretch: Cys19–Cys69, Cys23–Cys45, Cys31–Cys50, and Cys35–Cys52.

Belongs to the long (4 C-C) scorpion toxin superfamily. Sodium channel inhibitor family. Beta subfamily. In terms of tissue distribution, expressed by the venom gland.

The protein localises to the secreted. Its function is as follows. Beta toxins bind voltage-independently at site-4 of sodium channels (Nav) and shift the voltage of activation toward more negative potentials thereby affecting sodium channel activation and promoting spontaneous and repetitive firing. The chain is Toxin Tz2 from Tityus zulianus (Venezuelan scorpion).